The chain runs to 242 residues: tRNA (guanine-N(1)-)-methyltransferase (242 aa).

S-adenosyl-L-methionine is bound by residues glycine 108 and 127-132 (IGDYVL).

It belongs to the RNA methyltransferase TrmD family. As to quaternary structure, homodimer.

It localises to the cytoplasm. The enzyme catalyses guanosine(37) in tRNA + S-adenosyl-L-methionine = N(1)-methylguanosine(37) in tRNA + S-adenosyl-L-homocysteine + H(+). Functionally, specifically methylates guanosine-37 in various tRNAs. The sequence is that of tRNA (guanine-N(1)-)-methyltransferase from Lactobacillus acidophilus (strain ATCC 700396 / NCK56 / N2 / NCFM).